Reading from the N-terminus, the 446-residue chain is MSDKRRYFGTDGVRGKVGQYPITPDFVLKLGWAAGRVLAKQGTRKVIIGKDTRISGYMLESALEAGLAAAGLKATFTGPMPTPAVAYLTQTFRAEAGIVISASHNPYYDNGIKFFSYEGTKLPDDIELAIEAELDKDIECVESAELGKASRMVDAAGRYIEFCKSTFPSKLSLSGLKLVVDCANGATYHIAPNVFRELGAEVIAMGVEPNGLNINDQVGATDVRALQKRVVEEHAHLGLAFDGDGDRIIMVDHLGNKVDGDQIAYIIARDALRRGELKGGVVGTLMTNLGMENGLKQLGIPFVRAAVGDRYVMEKLLEKGWKIGAENSGHVILLDKVTTGDAIVAGLQVLASVVGSEMTLHELAKGMTLYPQVLENVRFAGDNNPLEADAVKAAVSEVEAELGSKGRVLLRKSGTEPLIRVMVEGEDETLVKQSALKIAQAVKDNC.

Ser103 (phosphoserine intermediate) is an active-site residue. Mg(2+) is bound by residues Ser103, Asp242, Asp244, and Asp246. Phosphoserine is present on Ser103.

The protein belongs to the phosphohexose mutase family. Mg(2+) is required as a cofactor. Activated by phosphorylation.

The catalysed reaction is alpha-D-glucosamine 1-phosphate = D-glucosamine 6-phosphate. Functionally, catalyzes the conversion of glucosamine-6-phosphate to glucosamine-1-phosphate. The sequence is that of Phosphoglucosamine mutase from Vibrio cholerae serotype O1 (strain ATCC 39315 / El Tor Inaba N16961).